The following is a 353-amino-acid chain: Phospho-N-acetylmuramoyl-pentapeptide-transferase (353 aa).

10 consecutive transmembrane segments (helical) span residues 24-44, 66-86, 88-108, 129-149, 160-180, 192-212, 229-249, 256-276, 281-301, and 330-350; these read LGFF…ILWA, TPTM…VLCA, LGNL…FVGF, FGML…KGLD, PLFE…FLST, GLAS…VYVA, VGEL…FLWY, VFMG…NAIV, ILLV…ILQV, and KVIV…LLSL.

This sequence belongs to the glycosyltransferase 4 family. MraY subfamily. Mg(2+) is required as a cofactor.

The protein resides in the cell inner membrane. The enzyme catalyses UDP-N-acetyl-alpha-D-muramoyl-L-alanyl-gamma-D-glutamyl-meso-2,6-diaminopimeloyl-D-alanyl-D-alanine + di-trans,octa-cis-undecaprenyl phosphate = di-trans,octa-cis-undecaprenyl diphospho-N-acetyl-alpha-D-muramoyl-L-alanyl-D-glutamyl-meso-2,6-diaminopimeloyl-D-alanyl-D-alanine + UMP. It participates in cell wall biogenesis; peptidoglycan biosynthesis. Catalyzes the initial step of the lipid cycle reactions in the biosynthesis of the cell wall peptidoglycan: transfers peptidoglycan precursor phospho-MurNAc-pentapeptide from UDP-MurNAc-pentapeptide onto the lipid carrier undecaprenyl phosphate, yielding undecaprenyl-pyrophosphoryl-MurNAc-pentapeptide, known as lipid I. In Helicobacter pylori (strain HPAG1), this protein is Phospho-N-acetylmuramoyl-pentapeptide-transferase.